A 229-amino-acid chain; its full sequence is Ferric nitrobindin-like protein (229 aa).

A disordered region spans residues methionine 1–aspartate 54. Residues aspartate 18 to alanine 33 show a composition bias toward low complexity. The GXWXGXG motif lies at glycine 82–glycine 88.

This sequence belongs to the nitrobindin family.

The polypeptide is Ferric nitrobindin-like protein (Corynebacterium glutamicum (strain R)).